A 464-amino-acid polypeptide reads, in one-letter code: FERM domain-containing protein 8 (464 aa).

N-acetylmethionine is present on Met-1. Residues Met-1–Val-22 are disordered. Phosphoserine is present on Ser-24. Residues Ala-30–Glu-376 form the FERM domain. The segment at Glu-376–Ser-408 is disordered. Phosphoserine occurs at positions 383, 387, and 408. Thr-419 is modified (phosphothreonine). A phosphoserine mark is found at Ser-439 and Ser-446.

Interacts with iRhom1/RHBDF1 and iRhom2/RHBDF2 (via cytoplasmic N-termini); this interaction leads to mutual protein stabilization. Interacts with ADAM17; this interaction is indirect and mediated by iRhom proteins. Interacts with LRP6; this interaction affects LRP6-binding to AXIN1. As to expression, widely expressed, with high expression in heart and spleen.

The protein resides in the cytoplasm. Its subcellular location is the cytosol. It localises to the cell membrane. Its function is as follows. Promotes the cell surface stability of iRhom1/RHBDF1 and iRhom2/RHBDF2 and prevents their degradation via the endolysosomal pathway. By acting on iRhoms, involved in ADAM17-mediated shedding of TNF, amphiregulin/AREG, HBEGF and TGFA from the cell surface. Negatively regulates Wnt signaling, possibly by antagonizing the recruitment of AXIN1 to LRP6. In Homo sapiens (Human), this protein is FERM domain-containing protein 8 (FRMD8).